The primary structure comprises 327 residues: L-lactate dehydrogenase 1 (327 aa).

Residues V21, D42, K47, Y72, and 86–87 (GA) each bind NAD(+). Substrate-binding positions include Q89, R95, and 127 to 130 (NPVD). NAD(+)-binding positions include 125-127 (AAN) and S150. 155–158 (DSAR) is a substrate binding site. The beta-D-fructose 1,6-bisphosphate site is built by R160 and H175. The active-site Proton acceptor is the H182. Y227 bears the Phosphotyrosine mark. Residue T236 participates in substrate binding.

It belongs to the LDH/MDH superfamily. LDH family. As to quaternary structure, homotetramer.

It localises to the cytoplasm. The enzyme catalyses (S)-lactate + NAD(+) = pyruvate + NADH + H(+). It functions in the pathway fermentation; pyruvate fermentation to lactate; (S)-lactate from pyruvate: step 1/1. With respect to regulation, allosterically activated by fructose 1,6-bisphosphate (FBP). Catalyzes the conversion of lactate to pyruvate. The polypeptide is L-lactate dehydrogenase 1 (Enterococcus faecalis (strain ATCC 700802 / V583)).